The following is a 1465-amino-acid chain: Myomesin-2 (1465 aa).

The segment at 38-61 (ASTQASSQKSLSQRSSSQRASSQT) is disordered. The span at 41–61 (QASSQKSLSQRSSSQRASSQT) shows a compositional bias: low complexity. Ig-like C2-type domains follow at residues 154–245 (PEIL…AAVV) and 266–371 (PLSS…AFLF). Fibronectin type-III domains are found at residues 385–480 (APMD…ALDP), 513–608 (PPTG…AQDV), 614–707 (APGR…VQAA), 710–812 (VPSH…TMPE), and 815–912 (PAYD…ARPG). Ig-like C2-type domains follow at residues 904 to 1002 (PVLV…EELE), 1130 to 1211 (PHFA…QDVS), and 1345 to 1434 (RLIG…VTVS). The tract at residues 1442-1465 (IPDMAPPQQAKPKLIPASASAAGQ) is disordered.

In terms of assembly, interacts with TTN/titin.

The protein localises to the cytoplasm. Its subcellular location is the myofibril. It localises to the sarcomere. The protein resides in the m line. Functionally, major component of the vertebrate myofibrillar M band. Binds myosin, titin, and light meromyosin. This binding is dose dependent. The polypeptide is Myomesin-2 (MYOM2) (Homo sapiens (Human)).